Here is a 108-residue protein sequence, read N- to C-terminus: Thiosulfate sulfurtransferase GlpE (108 aa).

A Rhodanese domain is found at 17–105; that stretch reads RQGAAVLVDI…WHRRFPANVA (89 aa). Catalysis depends on Cys-65, which acts as the Cysteine persulfide intermediate.

Belongs to the GlpE family.

The protein localises to the cytoplasm. The catalysed reaction is thiosulfate + hydrogen cyanide = thiocyanate + sulfite + 2 H(+). It carries out the reaction thiosulfate + [thioredoxin]-dithiol = [thioredoxin]-disulfide + hydrogen sulfide + sulfite + 2 H(+). Transferase that catalyzes the transfer of sulfur from thiosulfate to thiophilic acceptors such as cyanide or dithiols. May function in a CysM-independent thiosulfate assimilation pathway by catalyzing the conversion of thiosulfate to sulfite, which can then be used for L-cysteine biosynthesis. This is Thiosulfate sulfurtransferase GlpE from Salmonella agona (strain SL483).